The sequence spans 231 residues: NDR1/HIN1-like protein 3 (231 aa).

Residues 47–67 (VIFNILITIAVLLGIAALIIW) form a helical membrane-spanning segment. N-linked (GlcNAc...) asparagine glycosylation is found at Asn-102, Asn-135, Asn-145, and Asn-215.

As to quaternary structure, may form oligomers or be a component of larger protein complex in plasma membranes. In terms of processing, glycosylated. Expressed in roots, young and senescing leaves, cauline leaves, stems and siliques.

Its subcellular location is the cell membrane. Its function is as follows. Confers resistance to Pseudomonas syringae pv. tomato DC3000 (Pst DC3000). This chain is NDR1/HIN1-like protein 3, found in Arabidopsis thaliana (Mouse-ear cress).